The following is a 251-amino-acid chain: Probable transcriptional regulatory protein CT1665 (251 aa).

It belongs to the TACO1 family.

It is found in the cytoplasm. The polypeptide is Probable transcriptional regulatory protein CT1665 (Chlorobaculum tepidum (strain ATCC 49652 / DSM 12025 / NBRC 103806 / TLS) (Chlorobium tepidum)).